The primary structure comprises 430 residues: MKQAFRVALGFLVLWASVLHAEVRIEITQGVDSARPIGVVPFKWMGPGTPPEEIGAIVGADLRNSGKFNPIDAARMPQQPSTAAEVTPAAWTALGIDAVVVGQVQPSADGSYVVSYQLVDTSGSAGSILAQNQYKVTKQWLRYSAHTVSDEVFEKLTGIKGAFRTRIAYVVKTNGGKFPHELRVSDYDGYNQFVVHRSPEPLMSPAWSPDGSKIAYVTFESGKSALVIQTLANGAIRQVASFPRHNGAPAFSPDGTKLAFALSKSGSLNLYVMDLASGQISQVTDGRSNNTEPSWFPDSQNLAYTSDQGGRPQVYKVNINGGVPQRITWEGSQNQNADVSPDGKFLVLVSSNGGAQHIAKQDLETGAVQVLTDTLLDETPSIAPNGTMVIYSSTQGLGSVLQLVSTDGRFKARLPATDGQVKFPAWSPYL.

Residues 1–21 (MKQAFRVALGFLVLWASVLHA) form the signal peptide.

It belongs to the TolB family. In terms of assembly, the Tol-Pal system is composed of five core proteins: the inner membrane proteins TolA, TolQ and TolR, the periplasmic protein TolB and the outer membrane protein Pal. They form a network linking the inner and outer membranes and the peptidoglycan layer.

It localises to the periplasm. Its function is as follows. Part of the Tol-Pal system, which plays a role in outer membrane invagination during cell division and is important for maintaining outer membrane integrity. TolB occupies a key intermediary position in the Tol-Pal system because it communicates directly with both membrane-embedded components, Pal in the outer membrane and TolA in the inner membrane. In Yersinia pestis, this protein is Tol-Pal system protein TolB.